A 1086-amino-acid polypeptide reads, in one-letter code: WD repeat-containing protein 64 (1086 aa).

WD repeat units follow at residues 129–168 (RRRDVIKCIVKVPQLDLLITASQKGLITVFNSQDTSWITG), 170–199 (DYLGQLKRIVATTERTIIVWDYKAQGSSQE), 321–360 (AMPRGANSFCYCGKANVIVTGGDDKVLRLWHPNISTKPVG), 364–403 (GHMFSITEIVSNEKEQHVISLSSAKVFRVWDIQTLSVLQV), 411–448 (PGDMQIYSMVYDANHGMLITGSGVIDMYPLTRMIQDTK), 453–492 (THEREVNVTLYNKYFHQVLTVCSESVIKVWELETGLQIYQ), 498–537 (GLSIELTCAAIDESGYLFATGAYNGTVKIWDFGSGQEMKM), 560–602 (QVKQ…PYLQ), and 642–683 (IVDV…VKEI). The interval 724–749 (ICSSTQCDSSKGPQSSKGSKQSIHDA) is disordered. The segment covering 732–744 (SSKGPQSSKGSKQ) has biased composition (low complexity). WD repeat units follow at residues 765–806 (ASRK…KDML), 809–850 (TKHS…DPPH), and 863–902 (AHSLEIIQVIYVEEKQLVLTASIDGSVRIWNSTSGHYCGY). Positions 1047 to 1069 (DKVKREEAPEMTEGSRRKSLKRN) are disordered. Residues 1049–1062 (VKREEAPEMTEGSR) show a composition bias toward basic and acidic residues.

This chain is WD repeat-containing protein 64 (Wdr64), found in Mus musculus (Mouse).